The following is a 686-amino-acid chain: Methionine--tRNA ligase (686 aa).

A 'HIGH' region motif is present at residues 15 to 25; that stretch reads PYTNGPIHIGH. Cysteine 147, cysteine 150, cysteine 160, and cysteine 163 together coordinate Zn(2+). The short motif at 336-340 is the 'KMSKS' region element; it reads KLSTS. Threonine 339 is a binding site for ATP. One can recognise a tRNA-binding domain in the interval 584–686; it reads DFAKMDLRVG…AGVGNGEGIN (103 aa).

The protein belongs to the class-I aminoacyl-tRNA synthetase family. MetG type 1 subfamily. Homodimer. Zn(2+) serves as cofactor.

It is found in the cytoplasm. It carries out the reaction tRNA(Met) + L-methionine + ATP = L-methionyl-tRNA(Met) + AMP + diphosphate. Its function is as follows. Is required not only for elongation of protein synthesis but also for the initiation of all mRNA translation through initiator tRNA(fMet) aminoacylation. The sequence is that of Methionine--tRNA ligase from Flavobacterium psychrophilum (strain ATCC 49511 / DSM 21280 / CIP 103535 / JIP02/86).